Consider the following 364-residue polypeptide: D-alanine--D-alanine ligase (364 aa).

The region spanning 145–354 (KMAFEQAGLP…FPELVDKLVQ (210 aa)) is the ATP-grasp domain. 181–236 (EASLGYPCFVKPANLGSSVGISKVRSRQELEDALDNAANYDRRIIIEAGVAAREVE) serves as a coordination point for ATP. The Mg(2+) site is built by D307, E321, and N323.

Belongs to the D-alanine--D-alanine ligase family. It depends on Mg(2+) as a cofactor. Mn(2+) serves as cofactor.

It localises to the cytoplasm. It carries out the reaction 2 D-alanine + ATP = D-alanyl-D-alanine + ADP + phosphate + H(+). The protein operates within cell wall biogenesis; peptidoglycan biosynthesis. Functionally, cell wall formation. This Nostoc sp. (strain PCC 7120 / SAG 25.82 / UTEX 2576) protein is D-alanine--D-alanine ligase.